A 151-amino-acid polypeptide reads, in one-letter code: Putative pre-16S rRNA nuclease (151 aa).

This sequence belongs to the YqgF nuclease family.

The protein localises to the cytoplasm. Functionally, could be a nuclease involved in processing of the 5'-end of pre-16S rRNA. This is Putative pre-16S rRNA nuclease from Chlamydia pneumoniae (Chlamydophila pneumoniae).